The chain runs to 832 residues: Prickle-like protein 1-B (832 aa).

Residues 14 to 122 form the PET domain; the sequence is FGCQRSSTSD…NIKMLSRAVM (109 aa). LIM zinc-binding domains follow at residues 124–188, 189–249, and 250–313; these read AMCE…ELLK, PRCS…HYAE, and YCES…EDVH. Disordered regions lie at residues 312-346, 428-455, 602-701, and 766-832; these read VHAS…ADQC, QQPS…QRNN, ICQE…KERN, and CSSS…CIIS. 2 stretches are compositionally biased toward basic and acidic residues: residues 432 to 453 and 603 to 614; these read EDNR…DLQR and CQEKPPPEEKPM. Basic residues-rich tracts occupy residues 669–680 and 816–832; these read RPHHHRRRKSRK and TKSK…CIIS. Cys-829 carries the post-translational modification Cysteine methyl ester. Residue Cys-829 is the site of S-farnesyl cysteine attachment. The propeptide at 830 to 832 is removed in mature form; it reads IIS.

It belongs to the prickle / espinas / testin family. In terms of assembly, interacts with dvl2/dsh and mapk8/jnk1. In terms of tissue distribution, expressed in the dorsal marginal zone of early gastrulae (stage 10). As gastrulation proceeds, expression expands to include the lateral and ventral marginal zones, excluding the few rows of cells above the blastopore lip. Expression moves dorsally with gastrulation cell movements, and by the end of gastrulation expression is seen in dorsal mesoderm and posterior but not anterior neural ectoderm. Expression becomes down-regulated in mesoderm but remains strong in posterior ectoderm through the neurula stages. During tailbud stages, expressed in the pronephric duct, tailbud, tailtip and forming somites. In the most posterior regions, expressed in notochord and in the floorplate of the neural tube with weak expression in the roofplate. At stage 30, expressed in a complex pattern in the head including strong expression in the lens and otic vesicle.

It is found in the cell membrane. Its function is as follows. Acts in a planar cell polarity (PCP) complex; polarization along the apical/basal axis of epithelial cells. Regulates the polarized assembly of fibronectrin on the surface of the mesoderm during gastrulation. Essential for gastrulation cell movements, cooperating with dvl2/dsh to activate jnk. Acts together with tes to control axial elongation. The protein is Prickle-like protein 1-B (prickle1-b) of Xenopus laevis (African clawed frog).